Reading from the N-terminus, the 199-residue chain is Recombination protein RecR (199 aa).

The C4-type zinc-finger motif lies at 58–73; sequence CSICCNITDTDPCSMC. Positions 81–176 constitute a Toprim domain; sequence SVICVVEDPR…KVTRIAHGLP (96 aa).

The protein belongs to the RecR family.

Functionally, may play a role in DNA repair. It seems to be involved in an RecBC-independent recombinational process of DNA repair. It may act with RecF and RecO. This Clostridioides difficile (strain 630) (Peptoclostridium difficile) protein is Recombination protein RecR.